The following is a 309-amino-acid chain: MACKNPKKFFPICNSPILRDGALKGKVALVTGGGTGIGKAIATTFAHLGASVAIAARRMEKLEQTAEEIMKTTGGICEPFRMDIKDPGMVSDTFDKIDKKFGKHPDILVNNAAGNFIMATERLSPNAHGTIIDIVLKGTMNVTTELGKRCIQSKTGASVTSITAAYARSGAPFIVPSAVSKAGVEIMTKSLATEWSKYGLRFNAVSPGPIPTKGAWGRLFSGEMGDVAEKMKELNPEGRSGTPEEVANLVAFISSDHMSFMNGVIIDLDGGQQHFNHGSHMGDFLHTWDQDTWGDVENVIRGRTGKEKP.

Residues 32-37 (GGGTGI), arginine 57, and aspartate 83 each bind NADP(+). Arginine 57 provides a ligand contact to substrate. Residues phenylalanine 116 and serine 124 each contribute to the substrate site. Tyrosine 166 functions as the Proton acceptor in the catalytic mechanism. NADP(+) is bound by residues lysine 181 and 207–210 (PGPI). Arginine 218 is a substrate binding site.

Belongs to the short-chain dehydrogenases/reductases (SDR) family. 2,4-dienoyl-CoA reductase subfamily.

The catalysed reaction is a (2E,4E)-dienoyl-CoA + NADPH + H(+) = a 4,5-saturated-(3E)-enoyl-CoA + NADP(+). The enzyme catalyses a (2E,4Z)-dienoyl-CoA + NADPH + H(+) = a 4,5-saturated-(3E)-enoyl-CoA + NADP(+). In terms of biological role, auxiliary enzyme of beta-oxidation. It participates in the metabolism of unsaturated fatty enoyl-CoA esters having double bonds in both even- and odd-numbered positions. Catalyzes the NADP-dependent reduction of 2,4-dienoyl-CoA to yield trans-3-enoyl-CoA. The sequence is that of Probable 2,4-dienoyl-CoA reductase 3 [(3E)-enoyl-CoA-producing] from Caenorhabditis elegans.